We begin with the raw amino-acid sequence, 183 residues long: Protein jagunal homolog 1 (183 aa).

Over 1-39 (MASRAGPRAAGTDGSDFQHRERVAMHYQMSVTLKYEIKK) the chain is Cytoplasmic. Position 3 is a phosphoserine (serine 3). The helical transmembrane segment at 40 to 60 (LIYVHLVIWLLLVAKMSVGHL) threads the bilayer. Over 61–71 (RLLSHDQVAMP) the chain is Lumenal. Residues 72–92 (YQWEYPYLLSVVPSLLGLLSF) traverse the membrane as a helical segment. Topologically, residues 93–96 (PRNN) are cytoplasmic. The chain crosses the membrane as a helical span at residues 97–117 (ISYLVLSMISMGLFSIAPLIY). At 118-137 (GSMEMFPAAQQLYRHGKAYR) the chain is on the lumenal side. Residues 138–158 (FLFGFSAVSVMYLVLVLAVQV) form a helical membrane-spanning segment. At 159-183 (HAWQLYYSKKLLDSWFTSTQEKKRK) the chain is on the cytoplasmic side.

It belongs to the jagunal family. As to quaternary structure, interacts with COPA, COPB2 and COPG2.

It is found in the endoplasmic reticulum membrane. Endoplasmic reticulum transmembrane protein involved in vesicle-mediated transport, which is required for neutrophil function. Required for vesicle-mediated transport; it is however unclear whether it is involved in early secretory pathway or intracellular protein transport. Acts as a regulator of neutrophil function, probably via its role in vesicle-mediated transport: required for defense against fungal pathogens and for granulocyte colony-stimulating factor (GM-CSF) signaling pathway; possibly by regulating glycosylation and/or targeting of proteins contributing to the viability and migration of neutrophils. The protein is Protein jagunal homolog 1 (JAGN1) of Bos taurus (Bovine).